The following is a 336-amino-acid chain: Holliday junction branch migration complex subunit RuvB (336 aa).

The segment at 1–182 (MKERIVNLET…FGMSFRMQFY (182 aa)) is large ATPase domain (RuvB-L). ATP-binding positions include Leu21, Arg22, Gly63, Lys66, Thr67, Ser68, 129–131 (EDF), Arg172, Tyr182, and Arg219. Thr67 is a binding site for Mg(2+). The tract at residues 183–253 (SPSELSLIIK…ITLHALNELG (71 aa)) is small ATPAse domain (RuvB-S). Residues 256–336 (ELGFDEADLA…IPTLNPQTLF (81 aa)) are head domain (RuvB-H). DNA-binding residues include Arg310 and Arg315.

It belongs to the RuvB family. As to quaternary structure, homohexamer. Forms an RuvA(8)-RuvB(12)-Holliday junction (HJ) complex. HJ DNA is sandwiched between 2 RuvA tetramers; dsDNA enters through RuvA and exits via RuvB. An RuvB hexamer assembles on each DNA strand where it exits the tetramer. Each RuvB hexamer is contacted by two RuvA subunits (via domain III) on 2 adjacent RuvB subunits; this complex drives branch migration. In the full resolvosome a probable DNA-RuvA(4)-RuvB(12)-RuvC(2) complex forms which resolves the HJ.

The protein localises to the cytoplasm. It catalyses the reaction ATP + H2O = ADP + phosphate + H(+). Functionally, the RuvA-RuvB-RuvC complex processes Holliday junction (HJ) DNA during genetic recombination and DNA repair, while the RuvA-RuvB complex plays an important role in the rescue of blocked DNA replication forks via replication fork reversal (RFR). RuvA specifically binds to HJ cruciform DNA, conferring on it an open structure. The RuvB hexamer acts as an ATP-dependent pump, pulling dsDNA into and through the RuvAB complex. RuvB forms 2 homohexamers on either side of HJ DNA bound by 1 or 2 RuvA tetramers; 4 subunits per hexamer contact DNA at a time. Coordinated motions by a converter formed by DNA-disengaged RuvB subunits stimulates ATP hydrolysis and nucleotide exchange. Immobilization of the converter enables RuvB to convert the ATP-contained energy into a lever motion, pulling 2 nucleotides of DNA out of the RuvA tetramer per ATP hydrolyzed, thus driving DNA branch migration. The RuvB motors rotate together with the DNA substrate, which together with the progressing nucleotide cycle form the mechanistic basis for DNA recombination by continuous HJ branch migration. Branch migration allows RuvC to scan DNA until it finds its consensus sequence, where it cleaves and resolves cruciform DNA. In Helicobacter pylori (strain P12), this protein is Holliday junction branch migration complex subunit RuvB.